Here is a 140-residue protein sequence, read N- to C-terminus: Transcription antitermination protein NusB (140 aa).

This sequence belongs to the NusB family.

Involved in transcription antitermination. Required for transcription of ribosomal RNA (rRNA) genes. Binds specifically to the boxA antiterminator sequence of the ribosomal RNA (rrn) operons. The protein is Transcription antitermination protein NusB of Streptococcus pneumoniae (strain JJA).